We begin with the raw amino-acid sequence, 88 residues long: Small ribosomal subunit protein bS16 (88 aa).

Belongs to the bacterial ribosomal protein bS16 family.

This chain is Small ribosomal subunit protein bS16, found in Geotalea uraniireducens (strain Rf4) (Geobacter uraniireducens).